The following is a 161-amino-acid chain: uncharacterized protein (161 aa).

To R.leguminosarum PsiB.

This is an uncharacterized protein from Sinorhizobium fredii (strain NBRC 101917 / NGR234).